The following is a 338-amino-acid chain: Phenylalanine--tRNA ligase alpha subunit (338 aa).

Residue Glu-253 coordinates Mg(2+).

It belongs to the class-II aminoacyl-tRNA synthetase family. Phe-tRNA synthetase alpha subunit type 1 subfamily. As to quaternary structure, tetramer of two alpha and two beta subunits. Mg(2+) is required as a cofactor.

It localises to the cytoplasm. The enzyme catalyses tRNA(Phe) + L-phenylalanine + ATP = L-phenylalanyl-tRNA(Phe) + AMP + diphosphate + H(+). The sequence is that of Phenylalanine--tRNA ligase alpha subunit from Geotalea daltonii (strain DSM 22248 / JCM 15807 / FRC-32) (Geobacter daltonii).